A 256-amino-acid chain; its full sequence is Triosephosphate isomerase (256 aa).

Asparagine 10–lysine 12 serves as a coordination point for substrate. Histidine 97 serves as the catalytic Electrophile. The active-site Proton acceptor is the glutamate 169. Substrate contacts are provided by residues glycine 175, serine 214, and glycine 235 to glycine 236.

Belongs to the triosephosphate isomerase family. In terms of assembly, homodimer.

The protein resides in the cytoplasm. It catalyses the reaction D-glyceraldehyde 3-phosphate = dihydroxyacetone phosphate. Its pathway is carbohydrate biosynthesis; gluconeogenesis. The protein operates within carbohydrate degradation; glycolysis; D-glyceraldehyde 3-phosphate from glycerone phosphate: step 1/1. Involved in the gluconeogenesis. Catalyzes stereospecifically the conversion of dihydroxyacetone phosphate (DHAP) to D-glyceraldehyde-3-phosphate (G3P). The polypeptide is Triosephosphate isomerase (Haemophilus ducreyi (strain 35000HP / ATCC 700724)).